We begin with the raw amino-acid sequence, 270 residues long: uncharacterized protein (270 aa).

A signal peptide spans 1-22 (MEYIKKLLCTMSVLLLIIFIGG). Cys23 carries N-palmitoyl cysteine lipidation. Residue Cys23 is the site of S-diacylglycerol cysteine attachment.

The protein belongs to the staphylococcal tandem lipoprotein family.

It is found in the cell membrane. This is an uncharacterized protein from Staphylococcus aureus (strain bovine RF122 / ET3-1).